The following is a 249-amino-acid chain: Hydroxyacylglutathione hydrolase (249 aa).

Residues histidine 53, histidine 55, aspartate 57, histidine 58, histidine 110, aspartate 127, and histidine 165 each contribute to the Zn(2+) site.

Belongs to the metallo-beta-lactamase superfamily. Glyoxalase II family. In terms of assembly, monomer. It depends on Zn(2+) as a cofactor.

The enzyme catalyses an S-(2-hydroxyacyl)glutathione + H2O = a 2-hydroxy carboxylate + glutathione + H(+). It participates in secondary metabolite metabolism; methylglyoxal degradation; (R)-lactate from methylglyoxal: step 2/2. Functionally, thiolesterase that catalyzes the hydrolysis of S-D-lactoyl-glutathione to form glutathione and D-lactic acid. In Buchnera aphidicola subsp. Baizongia pistaciae (strain Bp), this protein is Hydroxyacylglutathione hydrolase.